The primary structure comprises 165 residues: PTS system glucose-specific EIIA component (165 aa).

The PTS EIIA type-1 domain occupies 33–137 (DPVFAGRMMG…STITPIVITN (105 aa)). Residues His70 and His85 each coordinate Zn(2+). His85 acts as the Tele-phosphohistidine intermediate; for EIIA activity in catalysis. His85 carries the post-translational modification Phosphohistidine; by HPr.

Heterodimer with glycerol kinase (glpk). The cofactor is Zn(2+).

It localises to the cytoplasm. The phosphoenolpyruvate-dependent sugar phosphotransferase system (sugar PTS), a major carbohydrate active transport system, catalyzes the phosphorylation of incoming sugar substrates concomitantly with their translocation across the cell membrane. The enzyme II complex composed of PtsG and Crr is involved in glucose transport. The chain is PTS system glucose-specific EIIA component (crr) from Bacillus cereus (strain ATCC 14579 / DSM 31 / CCUG 7414 / JCM 2152 / NBRC 15305 / NCIMB 9373 / NCTC 2599 / NRRL B-3711).